The chain runs to 318 residues: Ribose-phosphate pyrophosphokinase 1 (318 aa).

96 to 101 (RQDKKD) provides a ligand contact to ATP. Residues Asp128, His130, Asp139, and Asp143 each contribute to the Mg(2+) site. An ATP-binding site is contributed by His130. Residues 212–227 (KDRVAILVDDMADTCG) form a binding of phosphoribosylpyrophosphate region.

Belongs to the ribose-phosphate pyrophosphokinase family. As to quaternary structure, homodimer. The active form is probably a hexamer composed of 3 homodimers. Mg(2+) serves as cofactor.

It catalyses the reaction D-ribose 5-phosphate + ATP = 5-phospho-alpha-D-ribose 1-diphosphate + AMP + H(+). Its pathway is metabolic intermediate biosynthesis; 5-phospho-alpha-D-ribose 1-diphosphate biosynthesis; 5-phospho-alpha-D-ribose 1-diphosphate from D-ribose 5-phosphate (route I): step 1/1. With respect to regulation, activated by magnesium and inorganic phosphate. Catalyzes the synthesis of phosphoribosylpyrophosphate (PRPP) that is essential for nucleotide synthesis. In Macaca fascicularis (Crab-eating macaque), this protein is Ribose-phosphate pyrophosphokinase 1 (PRPS1).